We begin with the raw amino-acid sequence, 163 residues long: Thiol peroxidase (163 aa).

The Thioredoxin domain maps to 16 to 162 (LQVGDKALDF…FEAAIAAAKA (147 aa)). The active-site Cysteine sulfenic acid (-SOH) intermediate is C58. A disulfide bridge links C58 with C92.

Belongs to the peroxiredoxin family. Tpx subfamily. Homodimer.

The enzyme catalyses a hydroperoxide + [thioredoxin]-dithiol = an alcohol + [thioredoxin]-disulfide + H2O. In terms of biological role, thiol-specific peroxidase that catalyzes the reduction of hydrogen peroxide and organic hydroperoxides to water and alcohols, respectively. Plays a role in cell protection against oxidative stress by detoxifying peroxides. In Streptococcus pneumoniae serotype 2 (strain D39 / NCTC 7466), this protein is Thiol peroxidase.